Here is a 201-residue protein sequence, read N- to C-terminus: Recombination protein RecR (201 aa).

The C4-type zinc-finger motif lies at 57-72 (CRDCRTFTEQEVCTIC). In terms of domain architecture, Toprim spans 81 to 176 (GQICVVESPA…LASRIAHGVP (96 aa)).

This sequence belongs to the RecR family.

In terms of biological role, may play a role in DNA repair. It seems to be involved in an RecBC-independent recombinational process of DNA repair. It may act with RecF and RecO. The chain is Recombination protein RecR from Edwardsiella ictaluri (strain 93-146).